Here is a 365-residue protein sequence, read N- to C-terminus: ADP-ribosylhydrolase ARH3 (365 aa).

Mg(2+)-binding residues include Glu-42, Thr-77, Asp-78, and Asp-79. Residue Asp-78 coordinates substrate. Substrate contacts are provided by residues 147 to 153 (KGSYGNG), His-183, Leu-236, and Ile-272. Residues Asp-315, Asp-317, and Thr-318 each contribute to the Mg(2+) site.

Belongs to the ADP-ribosylglycohydrolase family. As to quaternary structure, monomer. It depends on Mg(2+) as a cofactor.

It localises to the nucleus. It is found in the cytoplasm. The protein resides in the chromosome. The protein localises to the mitochondrion matrix. It carries out the reaction [(1''-&gt;2')-ADP-alpha-D-ribose](n) + H2O = [(1''-&gt;2')-ADP-alpha-D-ribose](n-1) + ADP-D-ribose. The catalysed reaction is 1''-O-acetyl-ADP-alpha-D-ribose + H2O = ADP-D-ribose + acetate + H(+). It catalyses the reaction O-(ADP-D-ribosyl)-L-seryl-[protein] + H2O = ADP-D-ribose + L-seryl-[protein]. The enzyme catalyses alpha-NAD(+) + H2O = ADP-D-ribose + nicotinamide + H(+). With respect to regulation, the protein undergoes a dramatic conformational switch from closed to open states upon substrate-binding, which enables specific substrate recognition for the 1''-O-linkage. The glutamate flap (Glu-42) blocks substrate entrance to Mg(2+) in the unliganded closed state. In presence of substrate, Glu-42 is ejected from the active site: this closed-to-open transition significantly widens the substrate-binding channel and precisely positions the scissile 1''-O-linkage for cleavage while securing tightly 2'- and 3'-hydroxyls of ADP-ribose. In terms of biological role, ADP-ribosylhydrolase that preferentially hydrolyzes the scissile alpha-O-linkage attached to the anomeric C1'' position of ADP-ribose and acts on different substrates, such as proteins ADP-ribosylated on serine and threonine, free poly(ADP-ribose) and O-acetyl-ADP-D-ribose. Specifically acts as a serine mono-ADP-ribosylhydrolase by mediating the removal of mono-ADP-ribose attached to serine residues on proteins, thereby playing a key role in DNA damage response. Serine ADP-ribosylation of proteins constitutes the primary form of ADP-ribosylation of proteins in response to DNA damage. Does not hydrolyze ADP-ribosyl-arginine, -cysteine, -diphthamide, or -asparagine bonds. Also able to degrade protein free poly(ADP-ribose), which is synthesized in response to DNA damage: free poly(ADP-ribose) acts as a potent cell death signal and its degradation by ADPRHL2 protects cells from poly(ADP-ribose)-dependent cell death, a process named parthanatos. Also hydrolyzes free poly(ADP-ribose) in mitochondria. Specifically digests O-acetyl-ADP-D-ribose, a product of deacetylation reactions catalyzed by sirtuins. Specifically degrades 1''-O-acetyl-ADP-D-ribose isomer, rather than 2''-O-acetyl-ADP-D-ribose or 3''-O-acetyl-ADP-D-ribose isomers. In Bos taurus (Bovine), this protein is ADP-ribosylhydrolase ARH3 (ADPRS).